Here is an 81-residue protein sequence, read N- to C-terminus: YcgL domain-containing protein Tgr7_3126 (81 aa).

One can recognise a YcgL domain in the interval 1 to 81 (MQVYVYKSRR…QMPPQNERPL (81 aa)).

The protein is YcgL domain-containing protein Tgr7_3126 of Thioalkalivibrio sulfidiphilus (strain HL-EbGR7).